The following is a 117-amino-acid chain: Hydrogenase maturation factor HypA (117 aa).

Histidine 2 contributes to the Ni(2+) binding site. Zn(2+)-binding residues include cysteine 73, cysteine 76, cysteine 92, and cysteine 95.

The protein belongs to the HypA/HybF family.

In terms of biological role, involved in the maturation of [NiFe] hydrogenases. Required for nickel insertion into the metal center of the hydrogenase. This Solidesulfovibrio magneticus (strain ATCC 700980 / DSM 13731 / RS-1) (Desulfovibrio magneticus) protein is Hydrogenase maturation factor HypA.